Here is a 376-residue protein sequence, read N- to C-terminus: UPF0754 membrane protein BH1148 (376 aa).

2 consecutive transmembrane segments (helical) span residues 3 to 23 (LILF…SLAI) and 355 to 375 (YLGA…ILLI).

It belongs to the UPF0754 family.

Its subcellular location is the cell membrane. The protein is UPF0754 membrane protein BH1148 of Halalkalibacterium halodurans (strain ATCC BAA-125 / DSM 18197 / FERM 7344 / JCM 9153 / C-125) (Bacillus halodurans).